The chain runs to 264 residues: 3-methyl-2-oxobutanoate hydroxymethyltransferase (264 aa).

2 residues coordinate Mg(2+): aspartate 45 and aspartate 84. Residues 45–46, aspartate 84, and lysine 112 each bind 3-methyl-2-oxobutanoate; that span reads DS. Residue glutamate 114 coordinates Mg(2+). Glutamate 181 serves as the catalytic Proton acceptor.

It belongs to the PanB family. In terms of assembly, homodecamer; pentamer of dimers. Mg(2+) serves as cofactor.

It is found in the cytoplasm. It catalyses the reaction 3-methyl-2-oxobutanoate + (6R)-5,10-methylene-5,6,7,8-tetrahydrofolate + H2O = 2-dehydropantoate + (6S)-5,6,7,8-tetrahydrofolate. Its pathway is cofactor biosynthesis; (R)-pantothenate biosynthesis; (R)-pantoate from 3-methyl-2-oxobutanoate: step 1/2. Functionally, catalyzes the reversible reaction in which hydroxymethyl group from 5,10-methylenetetrahydrofolate is transferred onto alpha-ketoisovalerate to form ketopantoate. In Shewanella amazonensis (strain ATCC BAA-1098 / SB2B), this protein is 3-methyl-2-oxobutanoate hydroxymethyltransferase.